The primary structure comprises 401 residues: 8-amino-7-oxononanoate synthase (401 aa).

Arg24 is a binding site for substrate. 111–112 (GF) is a binding site for pyridoxal 5'-phosphate. His137 provides a ligand contact to substrate. Pyridoxal 5'-phosphate is bound by residues Ser183, His211, and Thr240. Lys243 carries the post-translational modification N6-(pyridoxal phosphate)lysine. Thr357 contributes to the substrate binding site.

Belongs to the class-II pyridoxal-phosphate-dependent aminotransferase family. BioF subfamily. In terms of assembly, homodimer. The cofactor is pyridoxal 5'-phosphate.

It catalyses the reaction 6-carboxyhexanoyl-[ACP] + L-alanine + H(+) = (8S)-8-amino-7-oxononanoate + holo-[ACP] + CO2. It participates in cofactor biosynthesis; biotin biosynthesis. Functionally, catalyzes the decarboxylative condensation of pimeloyl-[acyl-carrier protein] and L-alanine to produce 8-amino-7-oxononanoate (AON), [acyl-carrier protein], and carbon dioxide. The polypeptide is 8-amino-7-oxononanoate synthase (Xanthomonas campestris pv. campestris (strain 8004)).